Consider the following 675-residue polypeptide: DNA ligase (675 aa).

NAD(+) contacts are provided by residues 43–47, 92–93, and glutamate 122; these read DYEYD and SM. Lysine 124 acts as the N6-AMP-lysine intermediate in catalysis. Residues arginine 145, glutamate 179, lysine 295, and lysine 319 each coordinate NAD(+). Cysteine 413, cysteine 416, cysteine 431, and cysteine 436 together coordinate Zn(2+). Residues 597–675 form the BRCT domain; sequence SPDGYYKGKK…ETEAIAKFEQ (79 aa).

It belongs to the NAD-dependent DNA ligase family. LigA subfamily. Mg(2+) is required as a cofactor. The cofactor is Mn(2+).

The enzyme catalyses NAD(+) + (deoxyribonucleotide)n-3'-hydroxyl + 5'-phospho-(deoxyribonucleotide)m = (deoxyribonucleotide)n+m + AMP + beta-nicotinamide D-nucleotide.. Its function is as follows. DNA ligase that catalyzes the formation of phosphodiester linkages between 5'-phosphoryl and 3'-hydroxyl groups in double-stranded DNA using NAD as a coenzyme and as the energy source for the reaction. It is essential for DNA replication and repair of damaged DNA. The sequence is that of DNA ligase from Pediococcus pentosaceus (strain ATCC 25745 / CCUG 21536 / LMG 10740 / 183-1w).